The following is a 324-amino-acid chain: Beta-ketoacyl-[acyl-carrier-protein] synthase III (324 aa).

Catalysis depends on residues Cys-112 and His-249. Residues 250–254 are ACP-binding; the sequence is QANRR. Residue Asn-279 is part of the active site.

Belongs to the thiolase-like superfamily. FabH family. Homodimer.

Its subcellular location is the cytoplasm. It carries out the reaction malonyl-[ACP] + acetyl-CoA + H(+) = 3-oxobutanoyl-[ACP] + CO2 + CoA. The protein operates within lipid metabolism; fatty acid biosynthesis. In terms of biological role, catalyzes the condensation reaction of fatty acid synthesis by the addition to an acyl acceptor of two carbons from malonyl-ACP. Catalyzes the first condensation reaction which initiates fatty acid synthesis and may therefore play a role in governing the total rate of fatty acid production. Possesses both acetoacetyl-ACP synthase and acetyl transacylase activities. Its substrate specificity determines the biosynthesis of branched-chain and/or straight-chain of fatty acids. This chain is Beta-ketoacyl-[acyl-carrier-protein] synthase III, found in Streptococcus pyogenes serotype M3 (strain ATCC BAA-595 / MGAS315).